We begin with the raw amino-acid sequence, 275 residues long: Integrase homolog (275 aa).

Residues 88–111 (RVSQDRQAQGRERRSVLLPQERRG) are compositionally biased toward basic and acidic residues. Residues 88–120 (RVSQDRQAQGRERRSVLLPQERRGSSGRQPLYS) form a disordered region.

The protein belongs to the 'phage' integrase family.

Integrase-recombinase proteins are responsible for catalyzing strand exchange between DNA molecules and play an important role in the DNA replication. In terms of biological role, may be required for the formation of concatameric complex replicative intermediates and/or their resolution before encapsidation. In Dryophytes versicolor (chameleon treefrog), this protein is Integrase homolog (INT).